A 190-amino-acid polypeptide reads, in one-letter code: Negative regulator YfiR (190 aa).

Position 60 (Arg60) interacts with GMP. 2 cysteine pairs are disulfide-bonded: Cys71–Cys110 and Cys145–Cys152. GMP is bound by residues Arg175 and His177.

As to quaternary structure, homodimer. Interacts with TpbB/YfiN. Interacts with YfiB. The YfiB-YfiR complex is a 2:2 heterotetramer. Post-translationally, cys-71 and Cys-110 form a disulfide bond in the oxidized form but maintain their free form in the non-oxidized YfiR structure. The Cys-145-Cys-152 disulfide bond is well formed in both structures. The Cys145-Cys152 disulfide bond, but not Cys-71-Cys-110, plays an important role in maintaining the correct folding of the protein.

The protein resides in the periplasm. TpbB/YfiN repression is released through an YfiB-dependent sequestration of YfiR to the outer membrane. Binds vitamin B6 (VB6) or L-Trp at the periphery of the dimer, and both VB6 and L-Trp are able to reduce biofilm formation induced by YfiB L43P mutant. However, VB6 or L-Trp alone may have little effects in interrupting the YfiB-YfiR interaction. GMP enhances the binding affinity between YfiB and YfiR. In terms of biological role, negatively regulates the activity of the diguanylate cyclase TpbB/YfiN, leading to decreased c-di-GMP production. Inhibits TpbB/YfiN allosterically, through a hydrophobic interaction between the C-terminus of YfiR and a conserved region of the periplasmic PAS domain of TpbB/YfiN. Under reducing conditions, may also act as an YfiB-independent sensing device that is able to activate TpbB/YfiN in response to the redox status of the periplasm. Functionally, part of the YfiB-TpbB-YfiR (or yfiBNR) system, encoding a tripartite signaling module that modulates intracellular c-di-GMP levels. The system is a key regulator of the small colony variant (SCV) phenotype, and plays an important role in biofilm formation and in vivo persistence. The c-di-GMP produced by TpbB/YfiN stimulates the production of the Pel and Psl exopolysaccharides, which promotes surface attachment, generates an SCV phenotype and confers resistance against phagocytosis. The protein is Negative regulator YfiR of Pseudomonas aeruginosa (strain ATCC 15692 / DSM 22644 / CIP 104116 / JCM 14847 / LMG 12228 / 1C / PRS 101 / PAO1).